The primary structure comprises 309 residues: Taste receptor type 2 member 31 (309 aa).

Over 1–2 (MT) the chain is Extracellular. Residues 3 to 23 (TFIPIIFSSLVVVIFVIGNFA) traverse the membrane as a helical segment. Residues 24 to 55 (NGFIALVNSIEWFKRQKISFADQILTALAVSR) are Cytoplasmic-facing. The helical transmembrane segment at 56–76 (VGLLWVLLLNWYSTVLNPAFY) threads the bilayer. Topologically, residues 77–100 (SVEVRTTAYNVWAVTGHFSNWLAT) are extracellular. The chain crosses the membrane as a helical span at residues 101-121 (SLSIFYLLKIANFSNLIFLHL). Over 122 to 126 (KRRVK) the chain is Cytoplasmic. A helical transmembrane segment spans residues 127–147 (SVILVMLLGPLLFLACQLFMI). The Extracellular portion of the chain corresponds to 148 to 181 (NMKEIVRTKEYEGNMTWKIKLRSAVYLSDATVTT). The N-linked (GlcNAc...) asparagine glycan is linked to N161. A helical membrane pass occupies residues 182 to 202 (LGNLVPFTLTLLCFLLLICSL). Over 203–229 (CKHLKKMQLHGKGSQDPSTKVHIKVLQ) the chain is Cytoplasmic. The helical transmembrane segment at 230–250 (TVISFLLLCAIYFLSIMISVW) threads the bilayer. The Extracellular segment spans residues 251 to 259 (SFGSLKNKP). The chain crosses the membrane as a helical span at residues 260–280 (VFMFCKAMRFSYPSIHPFILI). Residues 281–309 (WGNKKLKQTFLSVLRQVRYWVKGEKPSSP) are Cytoplasmic-facing.

The protein belongs to the G-protein coupled receptor T2R family.

It localises to the membrane. In terms of biological role, receptor that may play a role in the perception of bitterness and is gustducin-linked. May play a role in sensing the chemical composition of the gastrointestinal content. The activity of this receptor may stimulate alpha gustducin, mediate PLC-beta-2 activation and lead to the gating of TRPM5. This Pan troglodytes (Chimpanzee) protein is Taste receptor type 2 member 31 (TAS2R31).